Reading from the N-terminus, the 501-residue chain is Lysine--tRNA ligase (501 aa).

Mg(2+) is bound by residues aspartate 411 and glutamate 418.

This sequence belongs to the class-II aminoacyl-tRNA synthetase family. Homodimer. It depends on Mg(2+) as a cofactor.

It localises to the cytoplasm. The catalysed reaction is tRNA(Lys) + L-lysine + ATP = L-lysyl-tRNA(Lys) + AMP + diphosphate. The chain is Lysine--tRNA ligase from Mycolicibacterium gilvum (strain PYR-GCK) (Mycobacterium gilvum (strain PYR-GCK)).